Here is a 385-residue protein sequence, read N- to C-terminus: Mannitol-1-phosphate 5-dehydrogenase (385 aa).

4–15 (AVHFGAGNIGRG) contributes to the NAD(+) binding site.

The protein belongs to the mannitol dehydrogenase family.

The catalysed reaction is D-mannitol 1-phosphate + NAD(+) = beta-D-fructose 6-phosphate + NADH + H(+). The sequence is that of Mannitol-1-phosphate 5-dehydrogenase from Lactococcus lactis subsp. lactis (strain IL1403) (Streptococcus lactis).